The primary structure comprises 334 residues: UDP-N-acetylenolpyruvoylglucosamine reductase (334 aa).

Residues 16–186 (INVFAKKIII…LSVGIKLPKT (171 aa)) form the FAD-binding PCMH-type domain. Residue Arg-162 is part of the active site. The active-site Proton donor is Ser-232. Glu-329 is a catalytic residue.

This sequence belongs to the MurB family. The cofactor is FAD.

The protein resides in the cytoplasm. The catalysed reaction is UDP-N-acetyl-alpha-D-muramate + NADP(+) = UDP-N-acetyl-3-O-(1-carboxyvinyl)-alpha-D-glucosamine + NADPH + H(+). It functions in the pathway cell wall biogenesis; peptidoglycan biosynthesis. Functionally, cell wall formation. This Buchnera aphidicola subsp. Baizongia pistaciae (strain Bp) protein is UDP-N-acetylenolpyruvoylglucosamine reductase.